A 116-amino-acid chain; its full sequence is Phage-like element PBSX protein XkdD (116 aa).

This chain is Phage-like element PBSX protein XkdD (xkdD), found in Bacillus subtilis (strain 168).